A 118-amino-acid chain; its full sequence is Large ribosomal subunit protein bL20 (118 aa).

This sequence belongs to the bacterial ribosomal protein bL20 family.

In terms of biological role, binds directly to 23S ribosomal RNA and is necessary for the in vitro assembly process of the 50S ribosomal subunit. It is not involved in the protein synthesizing functions of that subunit. This is Large ribosomal subunit protein bL20 from Acidiphilium cryptum (strain JF-5).